Reading from the N-terminus, the 346-residue chain is Heat-inducible transcription repressor HrcA (346 aa).

The protein belongs to the HrcA family.

Negative regulator of class I heat shock genes (grpE-dnaK-dnaJ and groELS operons). Prevents heat-shock induction of these operons. In Erythrobacter litoralis (strain HTCC2594), this protein is Heat-inducible transcription repressor HrcA.